Here is a 103-residue protein sequence, read N- to C-terminus: Large ribosomal subunit protein bL21 (103 aa).

Belongs to the bacterial ribosomal protein bL21 family. In terms of assembly, part of the 50S ribosomal subunit. Contacts protein L20.

This protein binds to 23S rRNA in the presence of protein L20. The protein is Large ribosomal subunit protein bL21 of Wigglesworthia glossinidia brevipalpis.